Reading from the N-terminus, the 272-residue chain is Ribosomal RNA small subunit methyltransferase A (272 aa).

Positions 18, 20, 45, 66, 91, and 113 each coordinate S-adenosyl-L-methionine.

The protein belongs to the class I-like SAM-binding methyltransferase superfamily. rRNA adenine N(6)-methyltransferase family. RsmA subfamily.

The protein localises to the cytoplasm. The catalysed reaction is adenosine(1518)/adenosine(1519) in 16S rRNA + 4 S-adenosyl-L-methionine = N(6)-dimethyladenosine(1518)/N(6)-dimethyladenosine(1519) in 16S rRNA + 4 S-adenosyl-L-homocysteine + 4 H(+). Specifically dimethylates two adjacent adenosines (A1518 and A1519) in the loop of a conserved hairpin near the 3'-end of 16S rRNA in the 30S particle. May play a critical role in biogenesis of 30S subunits. The sequence is that of Ribosomal RNA small subunit methyltransferase A from Yersinia enterocolitica serotype O:8 / biotype 1B (strain NCTC 13174 / 8081).